Reading from the N-terminus, the 553-residue chain is Mucolipin-3 (553 aa).

Topologically, residues 1–62 are cytoplasmic; it reads MANPEIVISS…FWARGRKPWK (62 aa). An interaction with phosphoinositides region spans residues 52–62; it reads KFWARGRKPWK. Residues 63–83 traverse the membrane as a helical segment; that stretch reads LAIQILKIAMVTIQLVLFGLS. The Extracellular portion of the chain corresponds to 84 to 283; that stretch reads NQMVVAFKEE…VSGSIQKNTH (200 aa). An extracellular/lumenal pore loop region spans residues 104 to 118; that stretch reads KGYIDRMDDTYAVYT. An N-linked (GlcNAc...) asparagine glycan is attached at asparagine 138. Cysteine 159 and cysteine 185 form a disulfide bridge. Asparagine 205 is a glycosylation site (N-linked (GlcNAc...) asparagine). Cysteine 238 and cysteine 269 are oxidised to a cystine. Residues 284 to 304 form a helical membrane-spanning segment; it reads NMMIFDAFVILTCLVSLILCI. The Cytoplasmic portion of the chain corresponds to 305–341; sequence RSVISGLQLQQEFVNFFLLHYKKDVSVSDQMEFVNGW. Residues 342-362 form a helical membrane-spanning segment; it reads YIMIIISDILTIIGSILKMEI. Topologically, residues 363–371 are extracellular; the sequence is QAKSLTSYD. The helical transmembrane segment at 372-392 threads the bilayer; it reads VCSILLGTSTMLVWLGVIRYL. Residues 393–414 lie on the Cytoplasmic side of the membrane; it reads GFFAKYNLLILTLQAALPNVIR. Residues 415–435 form a helical membrane-spanning segment; the sequence is FCCCAAMIYLGYCFCGWIVLG. Topologically, residues 436–443 are extracellular; it reads PYHNKFRS. Residues 444–464 constitute an intramembrane region (pore-forming); the sequence is LNMVSECLFSLINGDDMFATF. The Selectivity filter motif lies at 456-459; the sequence is NGDD. The Extracellular portion of the chain corresponds to 465–475; it reads AKMQQKSYLVW. The helical transmembrane segment at 476-497 threads the bilayer; it reads LFSRIYLYSFISLFIYMILSLF. Residues 498–553 lie on the Cytoplasmic side of the membrane; that stretch reads IALITDTYETIKHYQQDGFPETELRTFISECKDLPNSGKFRLEDDPPVSLFCCCKK.

It belongs to the transient receptor (TC 1.A.4) family. Polycystin subfamily. MCOLN3 sub-subfamily. As to quaternary structure, homotetramer. Can heterooligomerize with MCOLN1; heteromeric assemblies have different channel properties as compared to the respective homooligomers and may be tissue-specific. May heterooligomerize with TRPV5 to form a functional distinct ion channel. Interacts with GABARAPL2. N-glycosylated.

It localises to the lysosome membrane. The protein localises to the early endosome membrane. The protein resides in the late endosome membrane. Its subcellular location is the cytoplasmic vesicle. It is found in the autophagosome membrane. It localises to the cell projection. The protein localises to the stereocilium membrane. It catalyses the reaction Ca(2+)(in) = Ca(2+)(out). The enzyme catalyses Mg(2+)(in) = Mg(2+)(out). The catalysed reaction is K(+)(in) = K(+)(out). It carries out the reaction Na(+)(in) = Na(+)(out). Channel activity is activated by PtdIns(3,5)P2 (phosphatidylinositol 3,5-bisphosphate). Inhibited by lumenal H(+) and Na(+). The channel pore shows dynamic behavior and undergoes spontaneous, Ca(2+)-dependent modulation when conducting Ca(2+). Functionally, nonselective cation channel probably playing a role in the regulation of membrane trafficking events. Acts as a Ca(2+)-permeable cation channel with inwardly rectifying activity. Mediates release of Ca(2+) from endosomes to the cytoplasm, contributes to endosomal acidification and is involved in the regulation of membrane trafficking and fusion in the endosomal pathway. Also permeable to Mg(2+), Na(+) and K(+). Does not seem to act as mechanosensory transduction channel in inner ear sensory hair cells. Proposed to play a critical role at the cochlear stereocilia ankle-link region during hair-bundle growth. Involved in the regulation of autophagy. Through association with GABARAPL2 may be involved in autophagosome formation possibly providing Ca(2+) for the fusion process. Through a possible and probably tissue-specific heteromerization with MCOLN1 may be at least in part involved in many lysosome-dependent cellular events. Possible heteromeric ion channel assemblies with TRPV5 show pharmacological similarity with TRPML3. The sequence is that of Mucolipin-3 from Callithrix jacchus (White-tufted-ear marmoset).